Here is a 304-residue protein sequence, read N- to C-terminus: N-acetylmuramic acid 6-phosphate etherase 1 (304 aa).

Residues 1-10 (MENSHLGSLT) show a composition bias toward polar residues. Positions 1–20 (MENSHLGSLTTERRNERSKR) are disordered. An SIS domain is found at 58–221 (AVGSLKKGGR…STAAMIKMGK (164 aa)). Catalysis depends on glutamate 86, which acts as the Proton donor. The active site involves glutamate 117.

Belongs to the GCKR-like family. MurNAc-6-P etherase subfamily. Homodimer.

The catalysed reaction is N-acetyl-D-muramate 6-phosphate + H2O = N-acetyl-D-glucosamine 6-phosphate + (R)-lactate. Its pathway is amino-sugar metabolism; N-acetylmuramate degradation. Specifically catalyzes the cleavage of the D-lactyl ether substituent of MurNAc 6-phosphate, producing GlcNAc 6-phosphate and D-lactate. In Bacillus licheniformis (strain ATCC 14580 / DSM 13 / JCM 2505 / CCUG 7422 / NBRC 12200 / NCIMB 9375 / NCTC 10341 / NRRL NRS-1264 / Gibson 46), this protein is N-acetylmuramic acid 6-phosphate etherase 1.